We begin with the raw amino-acid sequence, 234 residues long: Uridylate kinase (234 aa).

ATP contacts are provided by residues 8–11 (KLSG), Gly-51, and Arg-55. UMP-binding positions include Asp-68 and 129-136 (TSNPFFTT). ATP is bound by residues Thr-156, Tyr-162, and Asp-165.

The protein belongs to the UMP kinase family. As to quaternary structure, homohexamer.

Its subcellular location is the cytoplasm. It catalyses the reaction UMP + ATP = UDP + ADP. It functions in the pathway pyrimidine metabolism; CTP biosynthesis via de novo pathway; UDP from UMP (UMPK route): step 1/1. With respect to regulation, inhibited by UTP. Functionally, catalyzes the reversible phosphorylation of UMP to UDP. This is Uridylate kinase from Fervidobacterium nodosum (strain ATCC 35602 / DSM 5306 / Rt17-B1).